A 116-amino-acid polypeptide reads, in one-letter code: Ribonuclease T (116 aa).

The 82-residue stretch at 18–99 (KRAILVGHNS…YDTEKTAELF (82 aa)) folds into the Exonuclease domain. The active-site Proton donor/acceptor is the histidine 86.

This sequence belongs to the RNase T family. As to quaternary structure, homodimer.

Functionally, trims short 3' overhangs of a variety of RNA species, leaving a one or two nucleotide 3' overhang. Responsible for the end-turnover of tRNA: specifically removes the terminal AMP residue from uncharged tRNA (tRNA-C-C-A). Also appears to be involved in tRNA biosynthesis. The sequence is that of Ribonuclease T from Azotobacter vinelandii.